The following is a 448-amino-acid chain: ATP-dependent protease ATPase subunit HslU (448 aa).

ATP-binding positions include Ile-18, Gly-60–Glu-65, Asp-261, Glu-326, and Arg-398.

It belongs to the ClpX chaperone family. HslU subfamily. As to quaternary structure, a double ring-shaped homohexamer of HslV is capped on each side by a ring-shaped HslU homohexamer. The assembly of the HslU/HslV complex is dependent on binding of ATP.

The protein resides in the cytoplasm. Its function is as follows. ATPase subunit of a proteasome-like degradation complex; this subunit has chaperone activity. The binding of ATP and its subsequent hydrolysis by HslU are essential for unfolding of protein substrates subsequently hydrolyzed by HslV. HslU recognizes the N-terminal part of its protein substrates and unfolds these before they are guided to HslV for hydrolysis. This Paraburkholderia xenovorans (strain LB400) protein is ATP-dependent protease ATPase subunit HslU.